Consider the following 258-residue polypeptide: MSSSLLLSGSTVSSSFIAPSKPSLVRNSSKTSLLPFRNVSRSFKTVKCTVDSSYGGNVPTFPRTRVWDPYKRLGVSPYASEEEIWASRNFLLQQYAGHERSEESIEGAFEKLLMSSFIRRKKTKINLKSKLKKKVEESPPWLKALLDFVEMPPMDTIFRRLFLFAFMGGWSIMNSAEGGPAFQVAVSLAACVYFLNEKTKSLGRACLIGIGALVAGWFCGSLIIPMIPTFLIQPTWTLELLTSLVAYVFLFLSCTFLK.

The N-terminal 48 residues, 1–48 (MSSSLLLSGSTVSSSFIAPSKPSLVRNSSKTSLLPFRNVSRSFKTVKC), are a transit peptide targeting the chloroplast. An N-acetylthreonine modification is found at T49. The interval 67–122 (WDPYKRLGVSPYASEEEIWASRNFLLQQYAGHERSEESIEGAFEKLLMSSFIRRKK) is J-like domain required for holdase chaperone activity. The next 3 membrane-spanning stretches (helical) occupy residues 162-182 (FLFAFMGGWSIMNSAEGGPAF), 207-227 (LIGIGALVAGWFCGSLIIPMI), and 237-257 (TLELLTSLVAYVFLFLSCTFL).

The protein belongs to the chaperone-like protein of POR1 protein family. As to quaternary structure, interacts with PORB in chloroplast. Interacts with PORA during plastid import. As to expression, expressed ubiquitously with higher levels in young leaves, flowers, and the root elongation zone.

Its subcellular location is the mitochondrion membrane. The protein resides in the plastid. It is found in the chloroplast envelope. It localises to the chloroplast thylakoid membrane. Its function is as follows. Essential protein required during embryogenesis. Exhibits holdase chaperone activity involved in the stabilization of NADPH:protochlorophyllide oxidoreductase (POR) proteins against photooxidative stress during POR proteins import into chloroplasts. Required for chloroplast biogenesis and development. When expressed in yeast, triggers mitochondria-mediated cell death associated with the loss of mitochondrial membrane potential. The protein is Protein CHAPERONE-LIKE PROTEIN OF POR1, chloroplastic of Arabidopsis thaliana (Mouse-ear cress).